Reading from the N-terminus, the 448-residue chain is Tryptophan dimethylallyltransferase 1 (448 aa).

Residues 80–81 (IL) and E89 each bind L-tryptophan. The substrate site is built by R100, K186, and Y188. Residues Y190 and R249 each coordinate L-tryptophan. Residues R262, K264, Y266, Q348, Y350, Y414, and Y418 each contribute to the substrate site.

It belongs to the tryptophan dimethylallyltransferase family. Homodimer.

It catalyses the reaction L-tryptophan + dimethylallyl diphosphate = 4-(3-methylbut-2-enyl)-L-tryptophan + diphosphate. It participates in alkaloid biosynthesis; ergot alkaloid biosynthesis. Tryptophan dimethylallyltransferase; part of the gene cluster that mediates the biosynthesis of fungal ergot alkaloid. DmaW catalyzes the first step of ergot alkaloid biosynthesis by condensing dimethylallyl diphosphate (DMAP) and tryptophan to form 4-dimethylallyl-L-tryptophan. The second step is catalyzed by the methyltransferase easF that methylates 4-dimethylallyl-L-tryptophan in the presence of S-adenosyl-L-methionine, resulting in the formation of 4-dimethylallyl-L-abrine. The catalase easC and the FAD-dependent oxidoreductase easE then transform 4-dimethylallyl-L-abrine to chanoclavine-I which is further oxidized by easD in the presence of NAD(+), resulting in the formation of chanoclavine-I aldehyde. Agroclavine dehydrogenase easG then mediates the conversion of chanoclavine-I aldehyde to agroclavine via a non-enzymatic adduct reaction: the substrate is an iminium intermediate that is formed spontaneously from chanoclavine-I aldehyde in the presence of glutathione. The presence of easA is not required to complete this reaction. Further conversion of agroclavine to paspalic acid is a two-step process involving oxidation of agroclavine to elymoclavine and of elymoclavine to paspalic acid, the second step being performed by the elymoclavine oxidase cloA. Paspalic acid is then further converted to D-lysergic acid. Ergopeptines are assembled from D-lysergic acid and three different amino acids by the D-lysergyl-peptide-synthetases composed each of a monomudular and a trimodular nonribosomal peptide synthetase subunit. LpsB and lpsC encode the monomodular subunits responsible for D-lysergic acid activation and incorporation into the ergopeptine backbone. LpsA1 and A2 subunits encode the trimodular nonribosomal peptide synthetase assembling the tripeptide portion of ergopeptines. LpsA1 is responsible for formation of the major ergopeptine, ergotamine, and lpsA2 for alpha-ergocryptine, the minor ergopeptine of the total alkaloid mixture elaborated by C.purpurea. D-lysergyl-tripeptides are assembled by the nonribosomal peptide synthetases and released as N-(D-lysergyl-aminoacyl)-lactams. Cyclolization of the D-lysergyl-tripeptides is performed by the Fe(2+)/2-ketoglutarate-dependent dioxygenase easH which introduces a hydroxyl group into N-(D-lysergyl-aminoacyl)-lactam at alpha-C of the aminoacyl residue followed by spontaneous condensation with the terminal lactam carbonyl group. The sequence is that of Tryptophan dimethylallyltransferase 1 from Claviceps purpurea (strain 20.1) (Ergot fungus).